The chain runs to 385 residues: Trichodiene synthase (385 aa).

The protein belongs to the trichodiene synthase family.

The catalysed reaction is (2E,6E)-farnesyl diphosphate = trichodiene + diphosphate. Its pathway is sesquiterpene biosynthesis; trichothecene biosynthesis. Functionally, TS is a member of the terpene cyclase group of enzymes. It catalyzes the isomerization and cyclization of farnesyl pyro-phosphate to form trichodiene, the first cyclic intermediate in the biosynthetic pathway for trichothecenes. It serves to branch trichothecene biosynthesis from the isoprenoid pathway. This chain is Trichodiene synthase (TRI5), found in Paramyrothecium roridum (Myrothecium leaf spot fungus).